A 341-amino-acid polypeptide reads, in one-letter code: Methionine import ATP-binding protein MetN (341 aa).

The region spanning 2-237 (IELCGLKKSF…PESLARKMLY (236 aa)) is the ABC transporter domain. 34–41 (GKSGAGKS) is a binding site for ATP.

It belongs to the ABC transporter superfamily. Methionine importer (TC 3.A.1.24) family. The complex is composed of two ATP-binding proteins (MetN), two transmembrane proteins (MetI) and a solute-binding protein (MetQ).

Its subcellular location is the cell inner membrane. It catalyses the reaction L-methionine(out) + ATP + H2O = L-methionine(in) + ADP + phosphate + H(+). The enzyme catalyses D-methionine(out) + ATP + H2O = D-methionine(in) + ADP + phosphate + H(+). Part of the ABC transporter complex MetNIQ involved in methionine import. Responsible for energy coupling to the transport system. The chain is Methionine import ATP-binding protein MetN from Legionella pneumophila (strain Paris).